A 1239-amino-acid chain; its full sequence is DNA-directed RNA polymerase subunit beta (1239 aa).

A disordered region spans residues 1182-1239 (IEGAENQLEDKEEKEEEKEENYKEDSDEYDDLREEDVEPDLEELSLDDLDLDDFGDEH). Acidic residues-rich tracts occupy residues 1191 to 1200 (DKEEKEEEKE) and 1206 to 1239 (DSDE…GDEH).

It belongs to the RNA polymerase beta chain family. As to quaternary structure, the RNAP catalytic core consists of 2 alpha, 1 beta, 1 beta' and 1 omega subunit. When a sigma factor is associated with the core the holoenzyme is formed, which can initiate transcription.

The enzyme catalyses RNA(n) + a ribonucleoside 5'-triphosphate = RNA(n+1) + diphosphate. In terms of biological role, DNA-dependent RNA polymerase catalyzes the transcription of DNA into RNA using the four ribonucleoside triphosphates as substrates. The protein is DNA-directed RNA polymerase subunit beta of Clostridium botulinum (strain Loch Maree / Type A3).